We begin with the raw amino-acid sequence, 180 residues long: Large ribosomal subunit protein uL6 (180 aa).

Belongs to the universal ribosomal protein uL6 family. In terms of assembly, part of the 50S ribosomal subunit.

Functionally, this protein binds to the 23S rRNA, and is important in its secondary structure. It is located near the subunit interface in the base of the L7/L12 stalk, and near the tRNA binding site of the peptidyltransferase center. In Borrelia hermsii (strain HS1 / DAH), this protein is Large ribosomal subunit protein uL6.